The primary structure comprises 400 residues: Formate-dependent phosphoribosylglycinamide formyltransferase (400 aa).

Residues 21-22 (EL) and Glu81 contribute to the N(1)-(5-phospho-beta-D-ribosyl)glycinamide site. ATP contacts are provided by residues Arg114, Lys155, 160–165 (SSGKGQ), 195–198 (EGRI), and Glu203. Positions 119 to 313 (RLAAEKLGLP…EFELHVRAIL (195 aa)) constitute an ATP-grasp domain. Residues Glu272 and Glu284 each contribute to the Mg(2+) site. N(1)-(5-phospho-beta-D-ribosyl)glycinamide is bound by residues Asp291, Lys360, and 367–368 (RR).

The protein belongs to the PurK/PurT family. In terms of assembly, homodimer.

It carries out the reaction N(1)-(5-phospho-beta-D-ribosyl)glycinamide + formate + ATP = N(2)-formyl-N(1)-(5-phospho-beta-D-ribosyl)glycinamide + ADP + phosphate + H(+). The protein operates within purine metabolism; IMP biosynthesis via de novo pathway; N(2)-formyl-N(1)-(5-phospho-D-ribosyl)glycinamide from N(1)-(5-phospho-D-ribosyl)glycinamide (formate route): step 1/1. Its function is as follows. Involved in the de novo purine biosynthesis. Catalyzes the transfer of formate to 5-phospho-ribosyl-glycinamide (GAR), producing 5-phospho-ribosyl-N-formylglycinamide (FGAR). Formate is provided by PurU via hydrolysis of 10-formyl-tetrahydrofolate. The protein is Formate-dependent phosphoribosylglycinamide formyltransferase of Methylococcus capsulatus (strain ATCC 33009 / NCIMB 11132 / Bath).